The primary structure comprises 293 residues: Ethanolamine ammonia-lyase small subunit (293 aa).

Residues valine 207 and glutamate 228 each coordinate adenosylcob(III)alamin.

Belongs to the EutC family. In terms of assembly, the basic unit is a heterodimer which dimerizes to form tetramers. The heterotetramers trimerize; 6 large subunits form a core ring with 6 small subunits projecting outwards. The cofactor is adenosylcob(III)alamin.

It is found in the bacterial microcompartment. The catalysed reaction is ethanolamine = acetaldehyde + NH4(+). It participates in amine and polyamine degradation; ethanolamine degradation. Its function is as follows. Catalyzes the deamination of various vicinal amino-alcohols to oxo compounds. Allows this organism to utilize ethanolamine as the sole source of nitrogen and carbon in the presence of external vitamin B12. This is Ethanolamine ammonia-lyase small subunit from Clostridioides difficile (strain 630) (Peptoclostridium difficile).